The sequence spans 149 residues: Peptide deformylase (149 aa).

Residues C92 and H134 each contribute to the Fe cation site. E135 is a catalytic residue. H138 serves as a coordination point for Fe cation.

This sequence belongs to the polypeptide deformylase family. The cofactor is Fe(2+).

The enzyme catalyses N-terminal N-formyl-L-methionyl-[peptide] + H2O = N-terminal L-methionyl-[peptide] + formate. Functionally, removes the formyl group from the N-terminal Met of newly synthesized proteins. Requires at least a dipeptide for an efficient rate of reaction. N-terminal L-methionine is a prerequisite for activity but the enzyme has broad specificity at other positions. The sequence is that of Peptide deformylase from Buchnera aphidicola subsp. Cinara cedri (strain Cc).